The primary structure comprises 632 residues: MELNDPSIISSSQFSGELSDSDTAAATHKSQQAISNLFQKLAKKGREEKPIGSVESSTDSSNISVATSGNNKESNKKKNKKTAMLNFSSLTDPITNYKPMDLQYKTYAYSMNELYHLKPSLASASYEEDPLISELVRSLPKRKFWRLRMGPPDQKHANNHHFNGNNGGGSWKAGYKNGKNDERRMSRTKNMQGGKRRSQQDDEEKKIDQEMLEMDKNLQLGGDVGHSIADFEDWKAKMKELELKKLSKSKGISNSTAIAPRESASHETPTDLRPVIPRGPSSITDFLNLKRQDKKEESSQQTPGIPVGQPSLSKTSIEQVNELETNSDLGKSSSSRFSSFFNKSATSLPSLDNNNQVPSSNVSVVNNDGNSTPHQSGSRLMSFFKESRSSTPNAESQLLSASDKDNGKMQTLPQFQQQPQQMQPMAFTQHPPNNNAFFNGLLNKGKSETSTPPPPPPGLIAHQGPQFPVMGVPPNFPQRMMPPPPGLVQFQKDSKDVNKKEDRQLRQNKNPNGTRNSKGKQEETATPDLPQQQYMPPPPPPGFFPMHPNFPNGPMPPLPQGFPIPPNGMLPVTGQQPQPPYPNMMLQGNFPPNFQQGFGSNSPMPIPSIINANGKNVTNQLPPGLNSKKNIK.

Disordered stretches follow at residues 1 to 80 (MELN…KKNK), 149 to 204 (MGPP…DDEE), and 248 to 313 (KSKG…PSLS). Polar residues-rich tracts occupy residues 7-38 (SIIS…SNLF) and 54-69 (VESS…ATSG). Ser30 carries the phosphoserine modification. Ser281 and Ser282 each carry phosphoserine. The span at 288 to 298 (NLKRQDKKEES) shows a compositional bias: basic and acidic residues. A phosphoserine mark is found at Ser327 and Ser344. Residues 347–378 (SLPSLDNNNQVPSSNVSVVNNDGNSTPHQSGS) form a disordered region. Over residues 353-371 (NNNQVPSSNVSVVNNDGNS) the composition is skewed to low complexity. Ser387 is modified (phosphoserine). 2 disordered regions span residues 429–541 (QHPP…PPPP) and 587–632 (QGNF…KNIK). An ATP-binding site is contributed by 440-447 (GLLNKGKS). Residues 474 to 486 (PNFPQRMMPPPPG) show a composition bias toward pro residues. Residues 492-505 (KDSKDVNKKEDRQL) are compositionally biased toward basic and acidic residues. Polar residues-rich tracts occupy residues 507 to 516 (QNKNPNGTRN), 590 to 603 (FPPN…SNSP), and 610 to 621 (INANGKNVTNQL).

As to quaternary structure, interacts with SMY2, SYH1 and eIF4E.

It is found in the cytoplasm. Functionally, can regulate translation through binding to eIF4E. Competes with eIF4G and p20 for binding to eIF4E in vivo and inhibits cap-dependent translation in vitro. Plays a role in cell growth and is implicated in the TOR signaling cascade. Functions independently of eIF4E to maintain genetic stability and to attenuate GCN4 translation upon TOR inactivation. This Saccharomyces cerevisiae (strain ATCC 204508 / S288c) (Baker's yeast) protein is Protein EAP1 (EAP1).